An 875-amino-acid chain; its full sequence is Valine--tRNA ligase (875 aa).

The short motif at 41–51 (PNVTGSLHMGH) is the 'HIGH' region element. The 'KMSKS' region signature appears at 525 to 529 (KMSKS). K528 is an ATP binding site. Positions 810–875 (VDLELIKKNL…ERISITIKGL (66 aa)) form a coiled coil.

It belongs to the class-I aminoacyl-tRNA synthetase family. ValS type 1 subfamily. Monomer.

Its subcellular location is the cytoplasm. It catalyses the reaction tRNA(Val) + L-valine + ATP = L-valyl-tRNA(Val) + AMP + diphosphate. Catalyzes the attachment of valine to tRNA(Val). As ValRS can inadvertently accommodate and process structurally similar amino acids such as threonine, to avoid such errors, it has a 'posttransfer' editing activity that hydrolyzes mischarged Thr-tRNA(Val) in a tRNA-dependent manner. This is Valine--tRNA ligase from Pelagibacter ubique (strain HTCC1062).